The following is a 268-amino-acid chain: Type III pantothenate kinase (268 aa).

6–13 (DVGNTNIV) contacts ATP. Substrate is bound by residues Y100 and 107-110 (GADR). Catalysis depends on D109, which acts as the Proton acceptor. D129 is a binding site for K(+). Residue T132 participates in ATP binding. T184 serves as a coordination point for substrate.

Belongs to the type III pantothenate kinase family. In terms of assembly, homodimer. The cofactor is NH4(+). K(+) serves as cofactor.

The protein localises to the cytoplasm. The catalysed reaction is (R)-pantothenate + ATP = (R)-4'-phosphopantothenate + ADP + H(+). The protein operates within cofactor biosynthesis; coenzyme A biosynthesis; CoA from (R)-pantothenate: step 1/5. Its function is as follows. Catalyzes the phosphorylation of pantothenate (Pan), the first step in CoA biosynthesis. The chain is Type III pantothenate kinase from Alkaliphilus metalliredigens (strain QYMF).